A 200-amino-acid chain; its full sequence is Mediator of RNA polymerase II transcription subunit 8 (200 aa).

This sequence belongs to the Mediator complex subunit 8 family. Component of the Mediator complex.

The protein resides in the nucleus. Its function is as follows. Component of the Mediator complex, a coactivator involved in the regulated transcription of nearly all RNA polymerase II-dependent genes. Mediator functions as a bridge to convey information from gene-specific regulatory proteins to the basal RNA polymerase II transcription machinery. Mediator is recruited to promoters by direct interactions with regulatory proteins and serves as a scaffold for the assembly of a functional preinitiation complex with RNA polymerase II and the general transcription factors. This is Mediator of RNA polymerase II transcription subunit 8 (med8) from Schizosaccharomyces pombe (strain 972 / ATCC 24843) (Fission yeast).